A 113-amino-acid chain; its full sequence is uncharacterized protein (113 aa).

The 48-residue stretch at 41–88 (DWHHHPDSDELFIVLEGELLIDFKDKETAVLKANDSLLIPKGTVHRTR) folds into the Cupin type-2 domain.

This sequence belongs to the SchB/CurC family.

This is an uncharacterized protein from Bacillus subtilis (strain 168).